The primary structure comprises 362 residues: Glutamate--cysteine ligase (362 aa).

It belongs to the glutamate--cysteine ligase type 2 family. YbdK subfamily.

It carries out the reaction L-cysteine + L-glutamate + ATP = gamma-L-glutamyl-L-cysteine + ADP + phosphate + H(+). Its function is as follows. Catalyzes the synthesis of gamma-glutamylcysteine (gamma-GC), the main low-molecular-weight thiol compound instead of glutathione in halophilic archaea. The polypeptide is Glutamate--cysteine ligase (Natronomonas pharaonis (strain ATCC 35678 / DSM 2160 / CIP 103997 / JCM 8858 / NBRC 14720 / NCIMB 2260 / Gabara) (Halobacterium pharaonis)).